The following is a 1085-amino-acid chain: Carbamoyl phosphate synthase large chain (1085 aa).

Positions 1–399 (MPKRTDISNI…ALQKALCSLE (399 aa)) are carboxyphosphate synthetic domain. 11 residues coordinate ATP: arginine 127, arginine 167, glycine 174, glutamate 206, leucine 208, glutamate 213, glycine 239, valine 240, histidine 241, glutamine 283, and glutamate 297. In terms of domain architecture, ATP-grasp 1 spans 131–326 (KEAMLKIGMD…IAKVATMLAV (196 aa)). Mg(2+) is bound by residues glutamine 283, glutamate 297, and asparagine 299. Residues glutamine 283, glutamate 297, and asparagine 299 each contribute to the Mn(2+) site. The interval 400–551 (NNWLGFESLS…YAPNPLPPIG (152 aa)) is oligomerization domain. Residues 552–951 (NKQEKQEKKI…AFFKAQTACF (400 aa)) form a carbamoyl phosphate synthetic domain region. The region spanning 678–871 (SLFLKELDIK…LAKVATRVMV (194 aa)) is the ATP-grasp 2 domain. ATP is bound by residues arginine 714, lysine 756, leucine 758, glutamate 763, glycine 788, isoleucine 789, histidine 790, serine 791, glutamine 830, and glutamate 842. Positions 830, 842, and 844 each coordinate Mg(2+). Mn(2+) contacts are provided by glutamine 830, glutamate 842, and asparagine 844. One can recognise an MGS-like domain in the interval 952–1085 (NPIKNKGLIF…ELLALQDYLK (134 aa)). An allosteric domain region spans residues 952-1085 (NPIKNKGLIF…ELLALQDYLK (134 aa)).

Belongs to the CarB family. In terms of assembly, composed of two chains; the small (or glutamine) chain promotes the hydrolysis of glutamine to ammonia, which is used by the large (or ammonia) chain to synthesize carbamoyl phosphate. Tetramer of heterodimers (alpha,beta)4. It depends on Mg(2+) as a cofactor. Requires Mn(2+) as cofactor.

The catalysed reaction is hydrogencarbonate + L-glutamine + 2 ATP + H2O = carbamoyl phosphate + L-glutamate + 2 ADP + phosphate + 2 H(+). It catalyses the reaction hydrogencarbonate + NH4(+) + 2 ATP = carbamoyl phosphate + 2 ADP + phosphate + 2 H(+). The protein operates within amino-acid biosynthesis; L-arginine biosynthesis; carbamoyl phosphate from bicarbonate: step 1/1. Its pathway is pyrimidine metabolism; UMP biosynthesis via de novo pathway; (S)-dihydroorotate from bicarbonate: step 1/3. Its function is as follows. Large subunit of the glutamine-dependent carbamoyl phosphate synthetase (CPSase). CPSase catalyzes the formation of carbamoyl phosphate from the ammonia moiety of glutamine, carbonate, and phosphate donated by ATP, constituting the first step of 2 biosynthetic pathways, one leading to arginine and/or urea and the other to pyrimidine nucleotides. The large subunit (synthetase) binds the substrates ammonia (free or transferred from glutamine from the small subunit), hydrogencarbonate and ATP and carries out an ATP-coupled ligase reaction, activating hydrogencarbonate by forming carboxy phosphate which reacts with ammonia to form carbamoyl phosphate. The protein is Carbamoyl phosphate synthase large chain of Helicobacter pylori (strain J99 / ATCC 700824) (Campylobacter pylori J99).